The sequence spans 89 residues: Signal recognition particle 19 kDa protein (89 aa).

This sequence belongs to the SRP19 family. As to quaternary structure, part of the signal recognition particle protein translocation system, which is composed of SRP and FtsY. Archaeal SRP consists of a 7S RNA molecule of 300 nucleotides and two protein subunits: SRP54 and SRP19.

The protein localises to the cytoplasm. Involved in targeting and insertion of nascent membrane proteins into the cytoplasmic membrane. Binds directly to 7S RNA and mediates binding of the 54 kDa subunit of the SRP. This Methanobrevibacter smithii (strain ATCC 35061 / DSM 861 / OCM 144 / PS) protein is Signal recognition particle 19 kDa protein.